The chain runs to 277 residues: Large ribosomal subunit protein uL2 (277 aa).

A disordered region spans residues 223-277 (VVMNPIDHPHGGGEGRTSGGRHPVTPWGKPTKGKKTRSNKSTNKFILISRHKRKK).

This sequence belongs to the universal ribosomal protein uL2 family. Part of the 50S ribosomal subunit. Forms a bridge to the 30S subunit in the 70S ribosome.

One of the primary rRNA binding proteins. Required for association of the 30S and 50S subunits to form the 70S ribosome, for tRNA binding and peptide bond formation. It has been suggested to have peptidyltransferase activity; this is somewhat controversial. Makes several contacts with the 16S rRNA in the 70S ribosome. The polypeptide is Large ribosomal subunit protein uL2 (Nitrobacter hamburgensis (strain DSM 10229 / NCIMB 13809 / X14)).